A 396-amino-acid polypeptide reads, in one-letter code: Mannonate dehydratase (396 aa).

This sequence belongs to the mannonate dehydratase family. Fe(2+) serves as cofactor. The cofactor is Mn(2+).

It carries out the reaction D-mannonate = 2-dehydro-3-deoxy-D-gluconate + H2O. It functions in the pathway carbohydrate metabolism; pentose and glucuronate interconversion. Catalyzes the dehydration of D-mannonate. The sequence is that of Mannonate dehydratase from Yersinia enterocolitica serotype O:8 / biotype 1B (strain NCTC 13174 / 8081).